Here is a 309-residue protein sequence, read N- to C-terminus: Glutaminase (309 aa).

Ser64, Asn114, Glu160, Asn167, Tyr191, Tyr243, and Val261 together coordinate substrate.

This sequence belongs to the glutaminase family. Homotetramer.

The enzyme catalyses L-glutamine + H2O = L-glutamate + NH4(+). The sequence is that of Glutaminase from Agrobacterium fabrum (strain C58 / ATCC 33970) (Agrobacterium tumefaciens (strain C58)).